Here is a 309-residue protein sequence, read N- to C-terminus: Ornithine carbamoyltransferase (309 aa).

Carbamoyl phosphate-binding positions include 51-54, Gln-78, Arg-102, and 129-132; these read STRT and HPVQ. Residues Asn-159, Asp-223, and 227–228 contribute to the L-ornithine site; that span reads SM. Carbamoyl phosphate-binding positions include 263-264 and Arg-291; that span reads CL.

The protein belongs to the aspartate/ornithine carbamoyltransferase superfamily. OTCase family.

Its subcellular location is the cytoplasm. It catalyses the reaction carbamoyl phosphate + L-ornithine = L-citrulline + phosphate + H(+). It participates in amino-acid biosynthesis; L-arginine biosynthesis; L-arginine from L-ornithine and carbamoyl phosphate: step 1/3. Functionally, reversibly catalyzes the transfer of the carbamoyl group from carbamoyl phosphate (CP) to the N(epsilon) atom of ornithine (ORN) to produce L-citrulline. This chain is Ornithine carbamoyltransferase, found in Nitratiruptor sp. (strain SB155-2).